The primary structure comprises 557 residues: Kelch repeat and BTB domain-containing protein 2 (557 aa).

The region spanning 26 to 95 is the BTB domain; it reads CDVIITIGDG…LYNRHISSMN (70 aa). The BACK domain maps to 133–223; it reads HKLYEMVHIP…CIDIQNLDKK (91 aa). Kelch repeat units lie at residues 305–352, 353–399, and 401–464; these read EIII…VIDD, TIYA…VLDQ, and IYII…SHKD.

Interacts (via BTB domain) with host CUL3.

It is found in the host cytoplasm. Functionally, probable substrate-specific adapter of CUL3-containing E3 ubiquitin-protein ligases which mediate the ubiquitination and subsequent proteasomal degradation of host target proteins. This is Kelch repeat and BTB domain-containing protein 2 (KBTB2) from Bos taurus (Bovine).